Consider the following 546-residue polypeptide: Sulfite oxidase, mitochondrial (546 aa).

Residues 1–80 constitute a mitochondrion transit peptide; that stretch reads MLLQLYRSVV…YHEHRCRASQ (80 aa). The Cytochrome b5 heme-binding domain occupies 83–162; sequence PRMYSKEDVR…LAEYKIGELN (80 aa). Heme b is bound at residue His-119. Residue Ser-124 is modified to Phosphoserine. Heme b is bound by residues His-144, Gln-146, and His-148. The interval 166–175 is hinge; sequence SMSPSVEASD. Residues 176–402 are moco domain; it reads PYADDPIRHP…YSHWQRRDYK (227 aa). Mo-molybdopterin contacts are provided by residues 216-220, Cys-265, Asp-323, His-362, Arg-367, and 378-380; these read FTRNH and HVK. Positions 403–539 are homodimerization; it reads GFSPSVDWDT…RGVLSNAWHR (137 aa).

In terms of assembly, homodimer. Heme b serves as cofactor. It depends on Mo-molybdopterin as a cofactor.

Its subcellular location is the mitochondrion intermembrane space. The catalysed reaction is sulfite + O2 + H2O = sulfate + H2O2. It participates in energy metabolism; sulfur metabolism. Catalyzes the oxidation of sulfite to sulfate, the terminal reaction in the oxidative degradation of sulfur-containing amino acids. This Mus musculus (Mouse) protein is Sulfite oxidase, mitochondrial (Suox).